The primary structure comprises 125 residues: Holo-[acyl-carrier-protein] synthase (125 aa).

Residues Asp-7 and Glu-56 each coordinate Mg(2+).

The protein belongs to the P-Pant transferase superfamily. AcpS family. Requires Mg(2+) as cofactor.

Its subcellular location is the cytoplasm. It catalyses the reaction apo-[ACP] + CoA = holo-[ACP] + adenosine 3',5'-bisphosphate + H(+). Its function is as follows. Transfers the 4'-phosphopantetheine moiety from coenzyme A to a Ser of acyl-carrier-protein. The chain is Holo-[acyl-carrier-protein] synthase from Chlamydia muridarum (strain MoPn / Nigg).